The sequence spans 333 residues: Adenosine deaminase (333 aa).

Positions 12 and 14 each coordinate Zn(2+). H14, D16, and G170 together coordinate substrate. H197 serves as a coordination point for Zn(2+). E200 (proton donor) is an active-site residue. D278 contributes to the Zn(2+) binding site. A substrate-binding site is contributed by D279.

This sequence belongs to the metallo-dependent hydrolases superfamily. Adenosine and AMP deaminases family. Adenosine deaminase subfamily. Requires Zn(2+) as cofactor.

It catalyses the reaction adenosine + H2O + H(+) = inosine + NH4(+). The enzyme catalyses 2'-deoxyadenosine + H2O + H(+) = 2'-deoxyinosine + NH4(+). In terms of biological role, catalyzes the hydrolytic deamination of adenosine and 2-deoxyadenosine. The polypeptide is Adenosine deaminase (Escherichia coli O157:H7).